Reading from the N-terminus, the 198-residue chain is Recombination protein RecR (198 aa).

A C4-type zinc finger spans residues 57-72; sequence CSVCGHITDRDPCYIC. One can recognise a Toprim domain in the interval 80–175; sequence SVVCVVQEPK…KVTRIAHGLP (96 aa).

This sequence belongs to the RecR family.

In terms of biological role, may play a role in DNA repair. It seems to be involved in an RecBC-independent recombinational process of DNA repair. It may act with RecF and RecO. The protein is Recombination protein RecR of Bacillus thuringiensis (strain Al Hakam).